The primary structure comprises 254 residues: UPF0603 protein YdjH (254 aa).

The N-terminal stretch at 1 to 29 (MRGFFGKAIFVVLAVFIMMPLLGIEAVRA) is a signal peptide. Residues 166 to 186 (IFFTWWFQLIAAIAVGGIAVS) traverse the membrane as a helical segment. Over residues 223 to 235 (VTRERKPSDKDSG) the composition is skewed to basic and acidic residues. Positions 223-254 (VTRERKPSDKDSGSDGGVTKGGTSYSGSRGSF) are disordered. Polar residues predominate over residues 243 to 254 (GGTSYSGSRGSF).

Belongs to the UPF0603 family.

Its subcellular location is the cell membrane. The chain is UPF0603 protein YdjH (ydjH) from Bacillus subtilis (strain 168).